The chain runs to 303 residues: Probable alpha-L-glutamate ligase (303 aa).

One can recognise an ATP-grasp domain in the interval 104–287; it reads LQLLAREGID…IAGMMIEFIE (184 aa). ATP is bound by residues Lys-141, 178–179, Asp-187, and 211–213; these read EY and RSN. Residues Asp-248, Glu-260, and Asn-262 each coordinate Mg(2+). 3 residues coordinate Mn(2+): Asp-248, Glu-260, and Asn-262.

Belongs to the RimK family. Mg(2+) serves as cofactor. It depends on Mn(2+) as a cofactor.

This Pectobacterium carotovorum subsp. carotovorum (strain PC1) protein is Probable alpha-L-glutamate ligase.